The chain runs to 237 residues: MWSTVLVLALSVICEPVRIGLVVLMLNRRRPLLHLLTFLCGGYTMAGGVAMVTLVVLGATPLAGHFSVAEVQIGTGLIALLIAFALTTNVIGKHVRRATHARVGDDGGRVLRESVPPSGAHKLAVRARCFLQGDSLYVAGVSGLGAALPSANYMGAMAAILASGATPATQALAVVTFNVVAFTVAEVPLVSYLAAPRKTRAFMAALQSWLRSRSRRDAALLVAAGGCLMLTLGLSNL.

Transmembrane regions (helical) follow at residues valine 5 to methionine 25, phenylalanine 38 to glycine 58, phenylalanine 66 to leucine 86, valine 141 to leucine 161, alanine 171 to serine 191, and aspartate 217 to leucine 237.

The protein belongs to the peptidoglycolipid addressing protein (GAP) (TC 2.A.116) family.

It localises to the cell inner membrane. Functionally, required for the transport across the inner membrane of sulfolipid-1 (SL-1), which is a major cell wall lipid of pathogenic mycobacteria. Could also transport SL1278 (2-palmitoyl-3-(C43)-phthioceranyl-alpha, alpha'-D-trehalose-2'-sulfate), which is the precursor of SL-1. May potentiate SL-1 levels and confer specificity for sulfolipids over structurally similar glycolipids. This is Sulfolipid-1 exporter Sap from Mycobacterium tuberculosis (strain ATCC 25618 / H37Rv).